Here is a 142-residue protein sequence, read N- to C-terminus: Deoxyuridine 5'-triphosphate nucleotidohydrolase (142 aa).

Substrate is bound by residues 62–64 (RSG), Asn-75, and 79–81 (TID).

It belongs to the dUTPase family. It depends on Mg(2+) as a cofactor.

It catalyses the reaction dUTP + H2O = dUMP + diphosphate + H(+). Its pathway is pyrimidine metabolism; dUMP biosynthesis; dUMP from dCTP (dUTP route): step 2/2. Functionally, this enzyme is involved in nucleotide metabolism: it produces dUMP, the immediate precursor of thymidine nucleotides and it decreases the intracellular concentration of dUTP so that uracil cannot be incorporated into DNA. The polypeptide is Deoxyuridine 5'-triphosphate nucleotidohydrolase (Clostridium novyi (strain NT)).